Reading from the N-terminus, the 223-residue chain is Proteinase inhibitor type-2 TR8 (223 aa).

An N-terminal signal peptide occupies residues 1–24 (MAIYKVALLLLFGMILLASDFEHA). A run of 3 repeats spans residues 24 to 81 (AKAC…EWVS), 88 to 145 (KKAC…EWVS), and 152 to 209 (EKDC…EWVS). Cystine bridges form between Cys27/Cys120, Cys31/Cys116, Cys40/Cys126, Cys52/Cys95, Cys55/Cys73, Cys56/Cys91, Cys62/Cys104, and Cys119/Cys137.

This sequence belongs to the protease inhibitor I20 (potato type II proteinase inhibitor) family.

This Solanum lycopersicum (Tomato) protein is Proteinase inhibitor type-2 TR8 (ARPI).